We begin with the raw amino-acid sequence, 246 residues long: Pyridoxine 5'-phosphate synthase (246 aa).

Asparagine 12 contributes to the 3-amino-2-oxopropyl phosphate binding site. 14–15 contributes to the 1-deoxy-D-xylulose 5-phosphate binding site; it reads DH. Position 23 (arginine 23) interacts with 3-amino-2-oxopropyl phosphate. Histidine 48 serves as the catalytic Proton acceptor. 1-deoxy-D-xylulose 5-phosphate contacts are provided by arginine 50 and histidine 55. Residue glutamate 75 is the Proton acceptor of the active site. Threonine 105 provides a ligand contact to 1-deoxy-D-xylulose 5-phosphate. Catalysis depends on histidine 196, which acts as the Proton donor. 3-amino-2-oxopropyl phosphate is bound by residues glycine 197 and 218-219; that span reads GH.

The protein belongs to the PNP synthase family. Homooctamer; tetramer of dimers.

The protein resides in the cytoplasm. The catalysed reaction is 3-amino-2-oxopropyl phosphate + 1-deoxy-D-xylulose 5-phosphate = pyridoxine 5'-phosphate + phosphate + 2 H2O + H(+). It participates in cofactor biosynthesis; pyridoxine 5'-phosphate biosynthesis; pyridoxine 5'-phosphate from D-erythrose 4-phosphate: step 5/5. Functionally, catalyzes the complicated ring closure reaction between the two acyclic compounds 1-deoxy-D-xylulose-5-phosphate (DXP) and 3-amino-2-oxopropyl phosphate (1-amino-acetone-3-phosphate or AAP) to form pyridoxine 5'-phosphate (PNP) and inorganic phosphate. The sequence is that of Pyridoxine 5'-phosphate synthase from Pseudomonas putida (strain W619).